Consider the following 196-residue polypeptide: MSAANMPTTTGAQGSGNQVPTTSTTIVNHFRELIKDPKNLDEASKYLFQTLLDDAVVGIFNETHHLRKSGNLAALDGVPEDSTYRMCEMPNLDIFGISTAKKPMDCTCPNCDRLVAAARFAPHLEKCMGMGRISSRIASRRLATKEGASSAHLHSAGNAGGTDDEDDVDWSSDKRRKKSNQNSRNNGSKKNNGKTF.

Residues 1-22 form a disordered region; sequence MSAANMPTTTGAQGSGNQVPTT. An SGF11-type zinc finger spans residues 106 to 127; that stretch reads CTCPNCDRLVAAARFAPHLEKC. Residues 144–196 form a disordered region; it reads TKEGASSAHLHSAGNAGGTDDEDDVDWSSDKRRKKSNQNSRNNGSKKNNGKTF. S172 is modified (phosphoserine). A compositionally biased stretch (low complexity) spans 180-196; the sequence is NQNSRNNGSKKNNGKTF.

This sequence belongs to the SGF11 family. Component of some SAGA transcription coactivator-HAT complexes, at least composed of Ada2b, not/nonstop, Pcaf/Gcn5, Sgf11 and Spt3. Within the SAGA complex, Sgf11, e(y)2, and not/nonstop form an additional subcomplex of SAGA called the DUB module (deubiquitination module). Interacts directly with not/nonstop. Interacts with the AMEX complex component xmas-2. Interacts with Cbp80; important for promoter recruitment of Sgf11 that is not associated with the DUB module.

The protein resides in the nucleus. It is found in the nucleoplasm. The protein localises to the cytoplasm. In terms of biological role, component of the transcription regulatory histone acetylation (HAT) complex SAGA, a multiprotein complex that activates transcription by remodeling chromatin and mediating histone acetylation and deubiquitination. Within the SAGA complex, participates in a subcomplex that specifically deubiquitinates histone H2B. The SAGA complex is recruited to specific gene promoters by activators, where it is required for transcription. Required for nuclear receptor-mediated transactivation. Binds independently on SAGA to promoters in an RNA-dependent manner. Binds to mRNA and is essential for total mRNA export from the nucleus. Required to counteract heterochromatin silencing. Controls the development of neuronal connectivity in visual system by being required for accurate axon targeting in the optic lobe. Required for expression of ecdysone-induced genes such as br/broad. This is SAGA-associated factor 11 homolog from Drosophila yakuba (Fruit fly).